Reading from the N-terminus, the 496-residue chain is Glycerol kinase (496 aa).

ADP is bound at residue T12. The ATP site is built by T12, T13, and S14. T12 serves as a coordination point for sn-glycerol 3-phosphate. ADP is bound at residue R16. Residues R82, E83, and Y134 each contribute to the sn-glycerol 3-phosphate site. Residues R82, E83, and Y134 each coordinate glycerol. H230 carries the phosphohistidine; by HPr modification. D244 is a binding site for sn-glycerol 3-phosphate. Positions 244 and 245 each coordinate glycerol. ADP-binding residues include T266 and G309. ATP-binding residues include T266, G309, Q313, and G410. 2 residues coordinate ADP: G410 and N414.

Belongs to the FGGY kinase family. Homotetramer and homodimer (in equilibrium). The phosphoenolpyruvate-dependent sugar phosphotransferase system (PTS), including enzyme I, and histidine-containing protein (HPr) are required for the phosphorylation, which leads to the activation of the enzyme.

The enzyme catalyses glycerol + ATP = sn-glycerol 3-phosphate + ADP + H(+). The protein operates within polyol metabolism; glycerol degradation via glycerol kinase pathway; sn-glycerol 3-phosphate from glycerol: step 1/1. Activated by phosphorylation and inhibited by fructose 1,6-bisphosphate (FBP). Its function is as follows. Key enzyme in the regulation of glycerol uptake and metabolism. Catalyzes the phosphorylation of glycerol to yield sn-glycerol 3-phosphate. The sequence is that of Glycerol kinase from Bacillus cereus (strain ATCC 14579 / DSM 31 / CCUG 7414 / JCM 2152 / NBRC 15305 / NCIMB 9373 / NCTC 2599 / NRRL B-3711).